The following is a 351-amino-acid chain: Biotin synthase (351 aa).

The Radical SAM core domain occupies 44-262 (NRVQVSTLLS…LAVARILMPQ (219 aa)). Positions 59, 63, and 66 each coordinate [4Fe-4S] cluster. [2Fe-2S] cluster-binding residues include Cys-103, Cys-134, Cys-194, and Arg-266.

The protein belongs to the radical SAM superfamily. Biotin synthase family. Homodimer. It depends on [4Fe-4S] cluster as a cofactor. Requires [2Fe-2S] cluster as cofactor.

The catalysed reaction is (4R,5S)-dethiobiotin + (sulfur carrier)-SH + 2 reduced [2Fe-2S]-[ferredoxin] + 2 S-adenosyl-L-methionine = (sulfur carrier)-H + biotin + 2 5'-deoxyadenosine + 2 L-methionine + 2 oxidized [2Fe-2S]-[ferredoxin]. It functions in the pathway cofactor biosynthesis; biotin biosynthesis; biotin from 7,8-diaminononanoate: step 2/2. Functionally, catalyzes the conversion of dethiobiotin (DTB) to biotin by the insertion of a sulfur atom into dethiobiotin via a radical-based mechanism. This chain is Biotin synthase, found in Pseudomonas fluorescens (strain ATCC BAA-477 / NRRL B-23932 / Pf-5).